A 313-amino-acid polypeptide reads, in one-letter code: Recombination-promoting nuclease pSLT051 (313 aa).

Belongs to the Rpn/YhgA-like nuclease family.

In terms of biological role, a low activity DNA endonuclease probably yielding 3'-hydroxyl ends. Involved in RecA-independent recombination and horizontal gene transfer. The polypeptide is Recombination-promoting nuclease pSLT051 (Salmonella typhimurium (strain LT2 / SGSC1412 / ATCC 700720)).